The primary structure comprises 340 residues: Probable cyclic nucleotide phosphodiesterase PsycPRwf_0181 (340 aa).

Residues 1 to 36 (MAPLPHSVSPRHTQVADNGRLSEPTDYHPPTEISTD) are disordered. 7 residues coordinate Fe cation: Asp47, His49, Asp128, Asn158, His237, His276, and His278. Residues His49, Asp128, and 158-159 (NH) each bind AMP. His278 contributes to the AMP binding site.

Belongs to the cyclic nucleotide phosphodiesterase class-III family. The cofactor is Fe(2+).

The chain is Probable cyclic nucleotide phosphodiesterase PsycPRwf_0181 from Psychrobacter sp. (strain PRwf-1).